Consider the following 223-residue polypeptide: Cytidylate kinase (223 aa).

ATP is bound at residue Gly12 to Thr20.

This sequence belongs to the cytidylate kinase family. Type 1 subfamily.

It localises to the cytoplasm. The catalysed reaction is CMP + ATP = CDP + ADP. It catalyses the reaction dCMP + ATP = dCDP + ADP. This chain is Cytidylate kinase, found in Xylella fastidiosa (strain M12).